A 247-amino-acid chain; its full sequence is Hydroxyacylglutathione hydrolase 1 (247 aa).

Zn(2+) contacts are provided by His-54, His-56, Asp-58, His-59, His-111, Asp-128, and His-165.

It belongs to the metallo-beta-lactamase superfamily. Glyoxalase II family. Monomer. The cofactor is Zn(2+).

The catalysed reaction is an S-(2-hydroxyacyl)glutathione + H2O = a 2-hydroxy carboxylate + glutathione + H(+). It functions in the pathway secondary metabolite metabolism; methylglyoxal degradation; (R)-lactate from methylglyoxal: step 2/2. Thiolesterase that catalyzes the hydrolysis of S-D-lactoyl-glutathione to form glutathione and D-lactic acid. The polypeptide is Hydroxyacylglutathione hydrolase 1 (Vibrio vulnificus (strain YJ016)).